The sequence spans 85 residues: Sec-independent protein translocase protein TatA (85 aa).

The chain crosses the membrane as a helical span at residues 1–21; the sequence is MGSFSIWHWLIVLVIIMMVFG. Residues 39–51 are compositionally biased toward basic and acidic residues; that stretch reads FKDGMREGQEDKP. Residues 39 to 85 form a disordered region; sequence FKDGMREGQEDKPAGSQQPQQTAGQPPRELHDATTIDVEARDKSKQG. Residues 53–62 are compositionally biased toward polar residues; sequence GSQQPQQTAG. Residues 66–85 show a composition bias toward basic and acidic residues; that stretch reads RELHDATTIDVEARDKSKQG.

Belongs to the TatA/E family. In terms of assembly, the Tat system comprises two distinct complexes: a TatABC complex, containing multiple copies of TatA, TatB and TatC subunits, and a separate TatA complex, containing only TatA subunits. Substrates initially bind to the TatABC complex, which probably triggers association of the separate TatA complex to form the active translocon.

It is found in the cell inner membrane. Functionally, part of the twin-arginine translocation (Tat) system that transports large folded proteins containing a characteristic twin-arginine motif in their signal peptide across membranes. TatA could form the protein-conducting channel of the Tat system. The sequence is that of Sec-independent protein translocase protein TatA from Ralstonia pickettii (strain 12J).